The primary structure comprises 234 residues: Uridylate kinase (234 aa).

ATP is bound at residue Gly-10 to Ser-11. Residue Gly-44 coordinates UMP. 2 residues coordinate ATP: Gly-45 and Arg-49. Residues Asp-66 and Ile-114–Thr-120 each bind UMP. The ATP site is built by Thr-140, Tyr-146, and Asp-149.

The protein belongs to the UMP kinase family. As to quaternary structure, homohexamer.

It is found in the cytoplasm. The enzyme catalyses UMP + ATP = UDP + ADP. It functions in the pathway pyrimidine metabolism; CTP biosynthesis via de novo pathway; UDP from UMP (UMPK route): step 1/1. Its activity is regulated as follows. Inhibited by UTP. Functionally, catalyzes the reversible phosphorylation of UMP to UDP. In Methanoregula boonei (strain DSM 21154 / JCM 14090 / 6A8), this protein is Uridylate kinase.